We begin with the raw amino-acid sequence, 81 residues long: Small ribosomal subunit protein bS20 (81 aa).

Over residues M1–V11 the composition is skewed to basic residues. The segment at M1–S20 is disordered.

This sequence belongs to the bacterial ribosomal protein bS20 family.

Binds directly to 16S ribosomal RNA. This is Small ribosomal subunit protein bS20 from Mesoplasma florum (strain ATCC 33453 / NBRC 100688 / NCTC 11704 / L1) (Acholeplasma florum).